The chain runs to 242 residues: Proteasome subunit alpha (242 aa).

It belongs to the peptidase T1A family. In terms of assembly, the 20S proteasome core is composed of 14 alpha and 14 beta subunits that assemble into four stacked heptameric rings, resulting in a barrel-shaped structure. The two inner rings, each composed of seven catalytic beta subunits, are sandwiched by two outer rings, each composed of seven alpha subunits. The catalytic chamber with the active sites is on the inside of the barrel. Has a gated structure, the ends of the cylinder being occluded by the N-termini of the alpha-subunits. Is capped at one or both ends by the proteasome regulatory ATPase, PAN.

The protein resides in the cytoplasm. With respect to regulation, the formation of the proteasomal ATPase PAN-20S proteasome complex, via the docking of the C-termini of PAN into the intersubunit pockets in the alpha-rings, triggers opening of the gate for substrate entry. Interconversion between the open-gate and close-gate conformations leads to a dynamic regulation of the 20S proteasome proteolysis activity. In terms of biological role, component of the proteasome core, a large protease complex with broad specificity involved in protein degradation. The chain is Proteasome subunit alpha from Sulfurisphaera tokodaii (strain DSM 16993 / JCM 10545 / NBRC 100140 / 7) (Sulfolobus tokodaii).